The sequence spans 746 residues: Disintegrin and metalloproteinase domain-containing protein 18 (746 aa).

Residues 1–16 (MFFLLALLTELGRLQA) form the signal peptide. The propeptide occupies 17 to 183 (HVGSEGIFLH…QKKNLSKLLP (167 aa)). Asn-36, Asn-122, Asn-149, Asn-156, Asn-177, and Asn-294 each carry an N-linked (GlcNAc...) asparagine glycan. The Extracellular portion of the chain corresponds to 177–687 (NLSKLLPQYL…EKGYNAHWNN (511 aa)). One can recognise a Peptidase M12B domain in the interval 184 to 381 (QYLEIYIIVE…FEAKCLQKLS (198 aa)). 4 disulfide bridges follow: Cys-293/Cys-376, Cys-335/Cys-360, Cys-337/Cys-342, and Cys-450/Cys-471. Asn-359, Asn-465, Asn-611, and Asn-625 each carry an N-linked (GlcNAc...) asparagine glycan. In terms of domain architecture, Disintegrin spans 390–479 (QPVCGNGILE…DCVPDTYALN (90 aa)). An EGF-like domain is found at 620-654 (TGYNCNTTTKCKGKGICNNFGNCQCFPGHKPPDCK). 3 disulfides stabilise this stretch: Cys-624-Cys-636, Cys-630-Cys-642, and Cys-644-Cys-653. A helical transmembrane segment spans residues 688-708 (WFILSFYIVLPFFIIFTIVIF). The Cytoplasmic segment spans residues 709-746 (KRNEIRKLCNRENTELIHPLYQKAMMWNINIAQNFRSK).

Post-translationally, the prodomain and the metalloprotease-like domain are cleaved during the epididymal maturation of the spermatozoa. In terms of tissue distribution, expressed predominantly in adult and prepubertal testis.

The protein resides in the membrane. Its function is as follows. Sperm surface membrane protein that may be involved in spermatogenesis and fertilization. This is a non catalytic metalloprotease-like protein. The chain is Disintegrin and metalloproteinase domain-containing protein 18 (ADAM18) from Macaca fascicularis (Crab-eating macaque).